The chain runs to 104 residues: L-rhamnose mutarotase (104 aa).

Position 18 (Tyr-18) interacts with substrate. The Proton donor role is filled by His-22. Substrate-binding positions include Tyr-41 and 76–77 (WW).

Belongs to the rhamnose mutarotase family. In terms of assembly, homodimer.

The protein localises to the cytoplasm. The enzyme catalyses alpha-L-rhamnose = beta-L-rhamnose. Its pathway is carbohydrate metabolism; L-rhamnose metabolism. Functionally, involved in the anomeric conversion of L-rhamnose. The protein is L-rhamnose mutarotase of Yersinia pseudotuberculosis serotype O:1b (strain IP 31758).